A 253-amino-acid polypeptide reads, in one-letter code: 5'-nucleotidase SurE (253 aa).

Residues Asp8, Asp9, Ser39, and Asn95 each contribute to the a divalent metal cation site.

This sequence belongs to the SurE nucleotidase family. A divalent metal cation serves as cofactor.

The protein localises to the cytoplasm. The enzyme catalyses a ribonucleoside 5'-phosphate + H2O = a ribonucleoside + phosphate. In terms of biological role, nucleotidase that shows phosphatase activity on nucleoside 5'-monophosphates. This is 5'-nucleotidase SurE from Chloroflexus aggregans (strain MD-66 / DSM 9485).